Consider the following 136-residue polypeptide: Non-structural protein 1 (136 aa).

Belongs to the pneumovirus non-structural protein 1 family. In terms of assembly, monomer. Homomultimer. Heteromultimer with NS2. Interacts with the matrix protein M. Interacts with host ELOC and CUL2; this interaction allows NS1 to form an active E3 ligase with ELOC and CUL2. Interacts with host IRF3; this interaction leads to the disrupted association of IRF3 with CREBBP and thus reduced binding of IRF3 to the IFN-beta promoter. Interacts with host MAVS; this interaction prevents MAVS binding to RIGI and inhibits signaling pathway leading to interferon production. Interacts with host TRIM25 (via SPRY domain); this interaction suppresses RIGI ubiquitination and results in decreased interaction between RIGI and MAVS.

The protein resides in the host cytoplasm. Its subcellular location is the host mitochondrion. The protein localises to the host nucleus. In terms of biological role, plays a major role in antagonizing the type I IFN-mediated antiviral response by degrading or inhibiting multiple cellular factors required for either IFN induction or response pathways. Acts cooperatively with NS2 to repress activation and nuclear translocation of host IFN-regulatory factor IRF3. Also disrupts the association of IRF3 with CREBBP. Interacts with host mitochondrial-associated membrane (MAM) MAVS and prevents the interaction with RIGI. Interacts with TRIM25 to suppress TRIM25-mediated RIGI ubiquitination and thereby RIGI-MAVS interaction. Together with NS2, participates in the proteasomal degradation of host STAT2, IRF3, IRF7, TBK1 and RIGI through a NS-degradasome involving CUL2 and Elongin-C. The degradasome requires an intact mitochondrial MAVS. Decreases the levels of host TRAF3 and IKBKE/IKK-epsilon. As functions other than disruptions of the type I IFN-mediated antiviral signaling pathways, induces host SOCS1 and SOCS3 expression. Suppresses premature apoptosis by an NF-kappa-B-dependent, interferon-independent mechanism and thus facilitates virus growth. Additionally, NS1 may serve some inhibitory role in viral transcription and RNA replication. Suppresses proliferation and activation of host CD103+ CD8+ cytotoxic T-lymphocytes and Th17 helper T-lymphocytes. This chain is Non-structural protein 1 (1C), found in Bos taurus (Bovine).